The chain runs to 319 residues: Ferrochelatase (319 aa).

The Fe cation site is built by His-193 and Glu-274.

It belongs to the ferrochelatase family.

It is found in the cytoplasm. The enzyme catalyses heme b + 2 H(+) = protoporphyrin IX + Fe(2+). It functions in the pathway porphyrin-containing compound metabolism; protoheme biosynthesis; protoheme from protoporphyrin-IX: step 1/1. Its function is as follows. Catalyzes the ferrous insertion into protoporphyrin IX. The protein is Ferrochelatase of Actinobacillus pleuropneumoniae serotype 7 (strain AP76).